We begin with the raw amino-acid sequence, 294 residues long: Glycine--tRNA ligase alpha subunit (294 aa).

The protein belongs to the class-II aminoacyl-tRNA synthetase family. Tetramer of two alpha and two beta subunits.

It localises to the cytoplasm. The catalysed reaction is tRNA(Gly) + glycine + ATP = glycyl-tRNA(Gly) + AMP + diphosphate. The chain is Glycine--tRNA ligase alpha subunit from Lawsonia intracellularis (strain PHE/MN1-00).